Reading from the N-terminus, the 145-residue chain is Probable low molecular weight protein-tyrosine-phosphatase EpsP (145 aa).

Cys9 acts as the Nucleophile in catalysis. Arg15 is a catalytic residue. The active-site Proton donor is the Asp114.

Belongs to the low molecular weight phosphotyrosine protein phosphatase family.

It catalyses the reaction O-phospho-L-tyrosyl-[protein] + H2O = L-tyrosyl-[protein] + phosphate. It participates in glycan metabolism; exopolysaccharide biosynthesis. Its function is as follows. May be involved in assembly or function of the EPS I polymerization/export complex and/or the EpsB ATPase. Alternatively it may function in the removal of the terminal phosphate from C55-isoprenyl pyrophosphate in order to recycle the C55-isoprenyl phosphate lipid carrier used in the synthesis of polysaccharide repeat units. This chain is Probable low molecular weight protein-tyrosine-phosphatase EpsP (epsP), found in Ralstonia solanacearum (Pseudomonas solanacearum).